Here is a 76-residue protein sequence, read N- to C-terminus: MQLALAAKYIGASMATLGLGGAAIGIALVFVALINGTSRNPSLRATLFPQAILGFALAEACGLFCLMMSFLLLYAV.

2 consecutive transmembrane segments (helical) span residues 14–34 (MATL…VALI) and 52–72 (ILGF…SFLL).

It belongs to the ATPase C chain family. In terms of assembly, F-type ATPases have 2 components, CF(1) - the catalytic core - and CF(0) - the membrane proton channel. CF(1) has five subunits: alpha(3), beta(3), gamma(1), delta(1), epsilon(1). CF(0) has three main subunits: a, b and c.

The protein localises to the mitochondrion membrane. In terms of biological role, mitochondrial membrane ATP synthase (F(1)F(0) ATP synthase or Complex V) produces ATP from ADP in the presence of a proton gradient across the membrane which is generated by electron transport complexes of the respiratory chain. F-type ATPases consist of two structural domains, F(1) - containing the extramembraneous catalytic core and F(0) - containing the membrane proton channel, linked together by a central stalk and a peripheral stalk. During catalysis, ATP synthesis in the catalytic domain of F(1) is coupled via a rotary mechanism of the central stalk subunits to proton translocation. Part of the complex F(0) domain. A homomeric c-ring of probably 10 subunits is part of the complex rotary element. The sequence is that of ATP synthase subunit 9, mitochondrial (ATP9) from Debaryomyces hansenii (strain ATCC 36239 / CBS 767 / BCRC 21394 / JCM 1990 / NBRC 0083 / IGC 2968) (Yeast).